The following is a 181-amino-acid chain: Protein Syd (181 aa).

The protein belongs to the Syd family.

The protein localises to the cell inner membrane. Its function is as follows. Interacts with the SecY protein in vivo. May bind preferentially to an uncomplexed state of SecY, thus functioning either as a chelating agent for excess SecY in the cell or as a regulatory factor that negatively controls the translocase function. The sequence is that of Protein Syd from Escherichia coli O17:K52:H18 (strain UMN026 / ExPEC).